A 163-amino-acid chain; its full sequence is Phosphopantetheine adenylyltransferase (163 aa).

A substrate-binding site is contributed by Thr10. ATP is bound by residues 10-11 (TF) and His18. Substrate contacts are provided by Lys42, Leu74, and Arg88. Residues 89–91 (GLR), Glu99, and 124–130 (NSFISST) contribute to the ATP site.

It belongs to the bacterial CoaD family. Homohexamer. Mg(2+) serves as cofactor.

The protein localises to the cytoplasm. The catalysed reaction is (R)-4'-phosphopantetheine + ATP + H(+) = 3'-dephospho-CoA + diphosphate. Its pathway is cofactor biosynthesis; coenzyme A biosynthesis; CoA from (R)-pantothenate: step 4/5. Its function is as follows. Reversibly transfers an adenylyl group from ATP to 4'-phosphopantetheine, yielding dephospho-CoA (dPCoA) and pyrophosphate. The sequence is that of Phosphopantetheine adenylyltransferase from Shewanella putrefaciens (strain CN-32 / ATCC BAA-453).